Consider the following 454-residue polypeptide: Phosphoglucosamine mutase (454 aa).

The active-site Phosphoserine intermediate is Ser101. Residues Ser101, Asp243, Asp245, and Asp247 each contribute to the Mg(2+) site. Ser101 is modified (phosphoserine).

It belongs to the phosphohexose mutase family. Mg(2+) is required as a cofactor. Post-translationally, activated by phosphorylation.

It catalyses the reaction alpha-D-glucosamine 1-phosphate = D-glucosamine 6-phosphate. Functionally, catalyzes the conversion of glucosamine-6-phosphate to glucosamine-1-phosphate. The protein is Phosphoglucosamine mutase of Geotalea daltonii (strain DSM 22248 / JCM 15807 / FRC-32) (Geobacter daltonii).